A 395-amino-acid polypeptide reads, in one-letter code: ATP phosphoribosyltransferase regulatory subunit (395 aa).

Belongs to the class-II aminoacyl-tRNA synthetase family. HisZ subfamily. Heteromultimer composed of HisG and HisZ subunits.

Its subcellular location is the cytoplasm. It participates in amino-acid biosynthesis; L-histidine biosynthesis; L-histidine from 5-phospho-alpha-D-ribose 1-diphosphate: step 1/9. Required for the first step of histidine biosynthesis. May allow the feedback regulation of ATP phosphoribosyltransferase activity by histidine. In Pseudomonas syringae pv. syringae (strain B728a), this protein is ATP phosphoribosyltransferase regulatory subunit.